A 216-amino-acid polypeptide reads, in one-letter code: MOB kinase activator 3B (216 aa).

Zn(2+) contacts are provided by Cys82, Cys87, His164, and His169.

Modulates LATS1 expression in the Hippo signaling pathway which plays a pivotal role in organ size control and tumor suppression by restricting proliferation and promoting apoptosis. In Mus musculus (Mouse), this protein is MOB kinase activator 3B (Mob3b).